The chain runs to 104 residues: Protein SMALL AUXIN UP-REGULATED RNA 12 (104 aa).

Belongs to the ARG7 family. In terms of tissue distribution, expressed in flowers and etiolated hypocotyls.

The protein resides in the cell membrane. Provide a mechanistic link between auxin and plasma membrane H(+)-ATPases (PM H(+)-ATPases, e.g. AHA1 and AHA2), and triggers PM H(+)-ATPases activity by promoting phosphorylation of their C-terminal autoinhibitory domain as a result of PP2C-D subfamily of type 2C phosphatases inhibition, thus leading to the acidification of the apoplast and the facilitation of solutes and water uptake to drive cell expansion. Triggers plant growth probably by promoting cell elongation. Regulates branch angles and bending. This chain is Protein SMALL AUXIN UP-REGULATED RNA 12, found in Arabidopsis thaliana (Mouse-ear cress).